The primary structure comprises 133 residues: Cytochrome c' (133 aa).

Heme c contacts are provided by arginine 12, threonine 72, cysteine 122, cysteine 125, and histidine 126.

In terms of processing, binds 1 heme c group covalently per subunit.

Functionally, cytochrome c' is the most widely occurring bacterial c-type cytochrome. Cytochromes c' are high-spin proteins and the heme has no sixth ligand. Their exact function is not known. This Rhodocyclus tenuis (Rhodospirillum tenue) protein is Cytochrome c'.